The primary structure comprises 352 residues: Threonine synthase (352 aa).

Lys59 carries the N6-(pyridoxal phosphate)lysine modification. Pyridoxal 5'-phosphate is bound by residues Asn85, 185–189, and Thr314; that span reads GNAGN.

The protein belongs to the threonine synthase family. The cofactor is pyridoxal 5'-phosphate.

It carries out the reaction O-phospho-L-homoserine + H2O = L-threonine + phosphate. It functions in the pathway amino-acid biosynthesis; L-threonine biosynthesis; L-threonine from L-aspartate: step 5/5. Functionally, catalyzes the gamma-elimination of phosphate from L-phosphohomoserine and the beta-addition of water to produce L-threonine. The polypeptide is Threonine synthase (thrC) (Bacillus subtilis (strain 168)).